The chain runs to 99 residues: Large ribosomal subunit protein uL23 (99 aa).

It belongs to the universal ribosomal protein uL23 family. Part of the 50S ribosomal subunit. Contacts protein L29, and trigger factor when it is bound to the ribosome.

Functionally, one of the early assembly proteins it binds 23S rRNA. One of the proteins that surrounds the polypeptide exit tunnel on the outside of the ribosome. Forms the main docking site for trigger factor binding to the ribosome. This chain is Large ribosomal subunit protein uL23, found in Pseudomonas fluorescens (strain SBW25).